Here is a 794-residue protein sequence, read N- to C-terminus: Kinesin-like protein KIN-13A (794 aa).

The Kinesin motor domain maps to 193–526 (KIKVVVRKRP…LRYADRVKSL (334 aa)). 282–289 (GQTGSGKT) provides a ligand contact to ATP. Residues 525 to 699 (SLSKSGNSKK…YETASRQYET (175 aa)) form a disordered region. Residues 569-579 (ETRRRVVEKDS) show a composition bias toward basic and acidic residues. Polar residues-rich tracts occupy residues 580-593 (NSST…QPTN) and 611-632 (EPNS…YPQE). Over residues 650–668 (GLREEKPDRPQNWSKRDVS) the composition is skewed to basic and acidic residues. The span at 669-696 (SSDIPTLTNFRQNASETASRQYETASRQ) shows a compositional bias: polar residues. The stretch at 705–742 (ENLDALLEEEEALIAAHRKEIEDTMEIVREEMKLLAEV) forms a coiled coil.

It belongs to the TRAFAC class myosin-kinesin ATPase superfamily. Kinesin family. KIN-13 subfamily. In terms of assembly, component of the active ARAC10-IRC5-KIN13A complex. Interacts (via-C-terminus) with ICR2 and ICR5 (via N-terminus). No interactions with ICR1. In terms of tissue distribution, expressed in leaves, roots, young and mature seedlings. Preferentially expressed in the secondary cell wall pits of differentiating metaxylem vessel cells (at the protein level).

The protein localises to the golgi apparatus. Its subcellular location is the golgi stack. It localises to the cytoplasm. It is found in the cytoskeleton. Functionally, internal motor kinesin involved in trichome morphogenesis. Participates in regulating the formation of Golgi-associated vesicles. Plays a central role in microtubule disassembly via the active ARAC10-ICR5 cascade, which establishes the secondary cell wall pattern in metaxylem vessel cells. Acts redundantly with KIN13B to modulate cell wall synthesis and cell expansion via the THE1 pathway. This chain is Kinesin-like protein KIN-13A, found in Arabidopsis thaliana (Mouse-ear cress).